The primary structure comprises 283 residues: Pantothenate synthetase (283 aa).

30–37 serves as a coordination point for ATP; it reads MGNLHAGH. Catalysis depends on histidine 37, which acts as the Proton donor. Glutamine 61 is a (R)-pantoate binding site. Residue glutamine 61 coordinates beta-alanine. Residue 149–152 coordinates ATP; it reads GRKD. Glutamine 155 contacts (R)-pantoate. Residue 186 to 189 participates in ATP binding; it reads LSSR.

Belongs to the pantothenate synthetase family. In terms of assembly, homodimer.

The protein resides in the cytoplasm. The enzyme catalyses (R)-pantoate + beta-alanine + ATP = (R)-pantothenate + AMP + diphosphate + H(+). It functions in the pathway cofactor biosynthesis; (R)-pantothenate biosynthesis; (R)-pantothenate from (R)-pantoate and beta-alanine: step 1/1. In terms of biological role, catalyzes the condensation of pantoate with beta-alanine in an ATP-dependent reaction via a pantoyl-adenylate intermediate. The sequence is that of Pantothenate synthetase from Chromohalobacter salexigens (strain ATCC BAA-138 / DSM 3043 / CIP 106854 / NCIMB 13768 / 1H11).